The primary structure comprises 94 residues: Pyrimidine/purine nucleoside phosphorylase (94 aa).

This sequence belongs to the nucleoside phosphorylase PpnP family.

The catalysed reaction is a purine D-ribonucleoside + phosphate = a purine nucleobase + alpha-D-ribose 1-phosphate. The enzyme catalyses adenosine + phosphate = alpha-D-ribose 1-phosphate + adenine. It catalyses the reaction cytidine + phosphate = cytosine + alpha-D-ribose 1-phosphate. It carries out the reaction guanosine + phosphate = alpha-D-ribose 1-phosphate + guanine. The catalysed reaction is inosine + phosphate = alpha-D-ribose 1-phosphate + hypoxanthine. The enzyme catalyses thymidine + phosphate = 2-deoxy-alpha-D-ribose 1-phosphate + thymine. It catalyses the reaction uridine + phosphate = alpha-D-ribose 1-phosphate + uracil. It carries out the reaction xanthosine + phosphate = alpha-D-ribose 1-phosphate + xanthine. Its function is as follows. Catalyzes the phosphorolysis of diverse nucleosides, yielding D-ribose 1-phosphate and the respective free bases. Can use uridine, adenosine, guanosine, cytidine, thymidine, inosine and xanthosine as substrates. Also catalyzes the reverse reactions. The sequence is that of Pyrimidine/purine nucleoside phosphorylase from Salmonella arizonae (strain ATCC BAA-731 / CDC346-86 / RSK2980).